Consider the following 209-residue polypeptide: Ribosomal RNA large subunit methyltransferase E (209 aa).

Glycine 63, tryptophan 65, aspartate 83, aspartate 99, and aspartate 124 together coordinate S-adenosyl-L-methionine. Lysine 164 serves as the catalytic Proton acceptor.

The protein belongs to the class I-like SAM-binding methyltransferase superfamily. RNA methyltransferase RlmE family.

The protein localises to the cytoplasm. The enzyme catalyses uridine(2552) in 23S rRNA + S-adenosyl-L-methionine = 2'-O-methyluridine(2552) in 23S rRNA + S-adenosyl-L-homocysteine + H(+). Specifically methylates the uridine in position 2552 of 23S rRNA at the 2'-O position of the ribose in the fully assembled 50S ribosomal subunit. In Shewanella piezotolerans (strain WP3 / JCM 13877), this protein is Ribosomal RNA large subunit methyltransferase E.